Consider the following 244-residue polypeptide: Acetylglutamate kinase (244 aa).

Substrate is bound by residues 40–41 (GG), Arg62, and Asn155.

It belongs to the acetylglutamate kinase family. ArgB subfamily.

Its subcellular location is the cytoplasm. The catalysed reaction is N-acetyl-L-glutamate + ATP = N-acetyl-L-glutamyl 5-phosphate + ADP. The protein operates within amino-acid biosynthesis; L-arginine biosynthesis; N(2)-acetyl-L-ornithine from L-glutamate: step 2/4. Functionally, catalyzes the ATP-dependent phosphorylation of N-acetyl-L-glutamate. The chain is Acetylglutamate kinase from Leuconostoc mesenteroides subsp. mesenteroides (strain ATCC 8293 / DSM 20343 / BCRC 11652 / CCM 1803 / JCM 6124 / NCDO 523 / NBRC 100496 / NCIMB 8023 / NCTC 12954 / NRRL B-1118 / 37Y).